The following is a 115-amino-acid chain: U2-ctenitoxin-Pn1b (115 aa).

The N-terminal stretch at 1-17 is a signal peptide; the sequence is MKVAVIILSILVLAAAS. The propeptide occupies 18-61; it reads ESIEEYREDFSRPNAMERSANDWIPTAPSAVERSADFAVEELER. Disulfide bonds link C64–C78, C71–C84, C75–C113, C77–C98, and C86–C96. K115 is a propeptide.

It belongs to the neurotoxin 03 (Tx2) family. 04 subfamily. Expressed by the venom gland.

Its subcellular location is the secreted. Blocks voltage-gated sodium channels (Nav). This chain is U2-ctenitoxin-Pn1b, found in Phoneutria nigriventer (Brazilian armed spider).